The chain runs to 423 residues: Haloacid dehalogenase-like hydrolase domain-containing 5 (423 aa).

A signal peptide spans 1-23 (MAAWGCVAALGAARGLCWRAARA).

It belongs to the HAD-like hydrolase superfamily. Widely expressed.

The chain is Haloacid dehalogenase-like hydrolase domain-containing 5 from Homo sapiens (Human).